The following is a 361-amino-acid chain: Feruloyl CoA ortho-hydroxylase 2 (361 aa).

Positions 211 to 312 constitute a Fe2OG dioxygenase domain; the sequence is GSTRINLNYY…RISVPIFVSP (102 aa). Y220 contacts 2-oxoglutarate. Positions 235, 237, and 293 each coordinate Fe cation. 2-oxoglutarate-binding residues include R303 and S305.

This sequence belongs to the iron/ascorbate-dependent oxidoreductase family. The cofactor is L-ascorbate. It depends on Fe(2+) as a cofactor. As to expression, low expression in roots.

It carries out the reaction (E)-feruloyl-CoA + 2-oxoglutarate + O2 = (E)-6-hydroxyferuloyl-CoA + succinate + CO2. It catalyses the reaction (E)-6-hydroxyferuloyl-CoA = scopoletin + CoA. Functionally, 2-oxoglutarate (OG)- and Fe(II)-dependent dioxygenase (2OGD)involved in scopoletin biosynthesis. Converts feruloyl CoA into 6'-hydroxyferuloyl CoA but has no activity with ferulic acid, feruloylquinic acid, caffeic acid, caffeoyl CoA, p-coumaric acid, cinnamic acid, cinnamoyl CoA or benzoyl CoA. This Arabidopsis thaliana (Mouse-ear cress) protein is Feruloyl CoA ortho-hydroxylase 2.